The chain runs to 277 residues: Large ribosomal subunit protein uL2 (277 aa).

Disordered regions lie at residues 1–23 (MAIKKYKPTSNGRRGMTSSDFAE), 36–58 (PLHKKGGRNNQGKLTVRHQGGGH), and 219–277 (TVRG…RKNK). Positions 8–20 (PTSNGRRGMTSSD) are enriched in polar residues. The span at 258–277 (KTRKKKNKSDKFIVRRRKNK) shows a compositional bias: basic residues.

It belongs to the universal ribosomal protein uL2 family. In terms of assembly, part of the 50S ribosomal subunit. Forms a bridge to the 30S subunit in the 70S ribosome.

One of the primary rRNA binding proteins. Required for association of the 30S and 50S subunits to form the 70S ribosome, for tRNA binding and peptide bond formation. It has been suggested to have peptidyltransferase activity; this is somewhat controversial. Makes several contacts with the 16S rRNA in the 70S ribosome. This is Large ribosomal subunit protein uL2 from Bacillus licheniformis (strain ATCC 14580 / DSM 13 / JCM 2505 / CCUG 7422 / NBRC 12200 / NCIMB 9375 / NCTC 10341 / NRRL NRS-1264 / Gibson 46).